A 183-amino-acid chain; its full sequence is Hypoxanthine/guanine phosphoribosyltransferase (183 aa).

This sequence belongs to the purine/pyrimidine phosphoribosyltransferase family. Archaeal HPRT subfamily. As to quaternary structure, homodimer.

It localises to the cytoplasm. It carries out the reaction IMP + diphosphate = hypoxanthine + 5-phospho-alpha-D-ribose 1-diphosphate. The catalysed reaction is GMP + diphosphate = guanine + 5-phospho-alpha-D-ribose 1-diphosphate. It participates in purine metabolism; IMP biosynthesis via salvage pathway; IMP from hypoxanthine: step 1/1. Catalyzes a salvage reaction resulting in the formation of IMP that is energically less costly than de novo synthesis. In Methanocaldococcus infernus (strain DSM 11812 / JCM 15783 / ME), this protein is Hypoxanthine/guanine phosphoribosyltransferase.